The primary structure comprises 360 residues: Beta-1,3-N-acetylglucosaminyltransferase manic fringe (360 aa).

The Cytoplasmic segment spans residues 1-5 (MILRR). A helical; Signal-anchor for type II membrane protein membrane pass occupies residues 6–26 (LFHVLPAFAFTLFILVLLDLQ). Over 27–360 (LRTRSDQKPQ…ALSWNQHVMH (334 aa)) the chain is Lumenal. The tract at residues 51 to 74 (TTAENQHRDGAHEKEKAEGQKWTE) is disordered. A compositionally biased stretch (basic and acidic residues) spans 55-74 (NQHRDGAHEKEKAEGQKWTE). R100 is a substrate binding site. Disulfide bonds link C139–C150 and C168–C231. Substrate is bound at residue D172. Residue D173 coordinates Mn(2+). N-linked (GlcNAc...) asparagine glycosylation is present at N214. D261 is an active-site residue. H285 contributes to the Mn(2+) binding site. C335 and C344 are joined by a disulfide.

It belongs to the glycosyltransferase 31 family. Mn(2+) is required as a cofactor.

It localises to the golgi apparatus membrane. It carries out the reaction 3-O-(alpha-L-fucosyl)-L-threonyl-[EGF-like domain protein] + UDP-N-acetyl-alpha-D-glucosamine = 3-O-(N-acetyl-beta-D-glucosaminyl-(1-&gt;3)-alpha-L-fucosyl)-L-threonyl-[EGF-like domain protein] + UDP + H(+). It catalyses the reaction 3-O-(alpha-L-fucosyl)-L-seryl-[EGF-like domain protein] + UDP-N-acetyl-alpha-D-glucosamine = 3-O-(N-acetyl-beta-D-glucosaminyl-(1-&gt;3)-alpha-L-fucosyl)-L-seryl-[EGF-like domain protein] + UDP + H(+). Its function is as follows. Glycosyltransferase that initiates the elongation of O-linked fucose residues attached to EGF-like repeats in the extracellular domain of Notch molecules. The sequence is that of Beta-1,3-N-acetylglucosaminyltransferase manic fringe from Danio rerio (Zebrafish).